The sequence spans 810 residues: Valine--tRNA ligase (810 aa).

The short motif at 45 to 55 is the 'HIGH' region element; it reads PTISGQLHIGH. A 'KMSKS' region motif is present at residues 534–538; that stretch reads KMSKS. Residue Lys537 coordinates ATP.

Belongs to the class-I aminoacyl-tRNA synthetase family. ValS type 2 subfamily. Monomer.

Its subcellular location is the cytoplasm. The catalysed reaction is tRNA(Val) + L-valine + ATP = L-valyl-tRNA(Val) + AMP + diphosphate. Functionally, catalyzes the attachment of valine to tRNA(Val). As ValRS can inadvertently accommodate and process structurally similar amino acids such as threonine, to avoid such errors, it has a 'posttransfer' editing activity that hydrolyzes mischarged Thr-tRNA(Val) in a tRNA-dependent manner. In Ehrlichia ruminantium (strain Welgevonden), this protein is Valine--tRNA ligase.